Reading from the N-terminus, the 880-residue chain is Translation initiation factor IF-2 (880 aa).

Disordered regions lie at residues 51–78, 93–116, and 142–293; these read KQHG…GSTG, YVKR…QAAN, and KEAD…FEKP. Positions 69-78 are enriched in polar residues; that stretch reads STLNVKGSTG. Positions 142-229 are enriched in basic and acidic residues; sequence KEADEKAKKA…ARKKAAEGGD (88 aa). Basic residues predominate over residues 269 to 279; it reads GRRTRRGKKQR. The tr-type G domain maps to 380-549; it reads SRAPVVTIMG…LLQAEMLDLS (170 aa). Residues 389–396 form a G1 region; the sequence is GHVDHGKT. 389–396 serves as a coordination point for GTP; that stretch reads GHVDHGKT. The segment at 414 to 418 is G2; the sequence is GITQH. The G3 stretch occupies residues 435-438; sequence DTPG. Residues 435–439 and 489–492 each bind GTP; these read DTPGH and NKID. The G4 stretch occupies residues 489 to 492; it reads NKID. Residues 525–527 form a G5 region; the sequence is SAK.

This sequence belongs to the TRAFAC class translation factor GTPase superfamily. Classic translation factor GTPase family. IF-2 subfamily.

The protein resides in the cytoplasm. One of the essential components for the initiation of protein synthesis. Protects formylmethionyl-tRNA from spontaneous hydrolysis and promotes its binding to the 30S ribosomal subunits. Also involved in the hydrolysis of GTP during the formation of the 70S ribosomal complex. This chain is Translation initiation factor IF-2, found in Psychromonas ingrahamii (strain DSM 17664 / CCUG 51855 / 37).